Here is a 407-residue protein sequence, read N- to C-terminus: Aspartate aminotransferase, cytoplasmic (407 aa).

L-aspartate contacts are provided by Gly39, Trp136, and Asn189. An N6-(pyridoxal phosphate)lysine modification is found at Lys253. Residue Arg381 coordinates L-aspartate.

The protein belongs to the class-I pyridoxal-phosphate-dependent aminotransferase family. In terms of assembly, homodimer. It depends on pyridoxal 5'-phosphate as a cofactor.

It localises to the cytoplasm. It catalyses the reaction L-aspartate + 2-oxoglutarate = oxaloacetate + L-glutamate. Its function is as follows. Important for the metabolism of amino acids and Krebs-cycle related organic acids. In plants, it is involved in nitrogen metabolism and in aspects of carbon and energy metabolism. This chain is Aspartate aminotransferase, cytoplasmic, found in Oryza sativa subsp. japonica (Rice).